We begin with the raw amino-acid sequence, 583 residues long: Laminarase-resistance protein LRE1 (583 aa).

The span at 1-24 shows a compositional bias: polar residues; sequence MPNTHTQHVQISEPNPVNTLSTPS. 2 disordered regions span residues 1–31 and 330–380; these read MPNTHTQHVQISEPNPVNTLSTPSKRGHRHR and LKDN…HMQH. 2 stretches are compositionally biased toward basic and acidic residues: residues 332 to 342 and 354 to 366; these read DNPRYAKDGYP and LDSDKRQDFSGES. A phosphoserine mark is found at Ser-393 and Ser-398. The tract at residues 457–486 is disordered; the sequence is SCTPDGKEEMNRLKSNDSNEYSKSEGQIRT. A compositionally biased stretch (basic and acidic residues) spans 461–479; that stretch reads DGKEEMNRLKSNDSNEYSK. Phosphoserine occurs at positions 516 and 552.

In terms of processing, phosphorylated by CDC28/CDK1.

Its function is as follows. Overexpression affects chitinase expression, cell separation and budding pattern, and increases trehalose accumulation and heat resistance by inhibiting protein kinase CBK1. Overexpression also suppresses temperature-induced hyperosmosensitivity and sensitivity to cell wall degrading enzymes. Overexpression of both LRE1 and PBN1 confers resistance to laminarinase. This is Laminarase-resistance protein LRE1 (LRE1) from Saccharomyces cerevisiae (strain ATCC 204508 / S288c) (Baker's yeast).